A 238-amino-acid polypeptide reads, in one-letter code: Ditrans,polycis-undecaprenyl-diphosphate synthase ((2E,6E)-farnesyl-diphosphate specific) (238 aa).

D14 is an active-site residue. D14 is a binding site for Mg(2+). Residues 15–18, W19, R27, H31, and 59–61 contribute to the substrate site; these read GNGR and SSE. The active-site Proton acceptor is N62. Residues W63, R65, R182, and 188–190 each bind substrate; that span reads RIS. Residue E201 coordinates Mg(2+).

Belongs to the UPP synthase family. As to quaternary structure, homodimer. Requires Mg(2+) as cofactor.

The catalysed reaction is 8 isopentenyl diphosphate + (2E,6E)-farnesyl diphosphate = di-trans,octa-cis-undecaprenyl diphosphate + 8 diphosphate. Functionally, catalyzes the sequential condensation of isopentenyl diphosphate (IPP) with (2E,6E)-farnesyl diphosphate (E,E-FPP) to yield (2Z,6Z,10Z,14Z,18Z,22Z,26Z,30Z,34E,38E)-undecaprenyl diphosphate (di-trans,octa-cis-UPP). UPP is the precursor of glycosyl carrier lipid in the biosynthesis of bacterial cell wall polysaccharide components such as peptidoglycan and lipopolysaccharide. The chain is Ditrans,polycis-undecaprenyl-diphosphate synthase ((2E,6E)-farnesyl-diphosphate specific) from Legionella pneumophila subsp. pneumophila (strain Philadelphia 1 / ATCC 33152 / DSM 7513).